The sequence spans 156 residues: Probable chemoreceptor glutamine deamidase CheD (156 aa).

The protein belongs to the CheD family.

The enzyme catalyses L-glutaminyl-[protein] + H2O = L-glutamyl-[protein] + NH4(+). In terms of biological role, probably deamidates glutamine residues to glutamate on methyl-accepting chemotaxis receptors (MCPs), playing an important role in chemotaxis. The polypeptide is Probable chemoreceptor glutamine deamidase CheD (Bdellovibrio bacteriovorus (strain ATCC 15356 / DSM 50701 / NCIMB 9529 / HD100)).